A 60-amino-acid chain; its full sequence is Large ribosomal subunit protein bL32 (60 aa).

It belongs to the bacterial ribosomal protein bL32 family.

The sequence is that of Large ribosomal subunit protein bL32 from Ruminiclostridium cellulolyticum (strain ATCC 35319 / DSM 5812 / JCM 6584 / H10) (Clostridium cellulolyticum).